The primary structure comprises 130 residues: Small ribosomal subunit protein uS8 (130 aa).

The protein belongs to the universal ribosomal protein uS8 family. Part of the 30S ribosomal subunit. Contacts proteins S5 and S12.

In terms of biological role, one of the primary rRNA binding proteins, it binds directly to 16S rRNA central domain where it helps coordinate assembly of the platform of the 30S subunit. The chain is Small ribosomal subunit protein uS8 from Shewanella pealeana (strain ATCC 700345 / ANG-SQ1).